The following is a 357-amino-acid chain: Alanine racemase (357 aa).

Catalysis depends on Lys-33, which acts as the Proton acceptor; specific for D-alanine. Lys-33 is modified (N6-(pyridoxal phosphate)lysine). Position 129 (Arg-129) interacts with substrate. Tyr-253 functions as the Proton acceptor; specific for L-alanine in the catalytic mechanism. Residue Met-301 participates in substrate binding.

It belongs to the alanine racemase family. In terms of assembly, homodimer. Pyridoxal 5'-phosphate is required as a cofactor.

The enzyme catalyses L-alanine = D-alanine. The protein operates within amino-acid biosynthesis; D-alanine biosynthesis; D-alanine from L-alanine: step 1/1. Its function is as follows. Catalyzes the interconversion of L-alanine and D-alanine. Is highly specific for alanine as substrate. May serve both anabolic and catabolic purposes. This Pseudomonas taetrolens protein is Alanine racemase.